A 1076-amino-acid polypeptide reads, in one-letter code: Cytadherence high molecular weight protein 3 (1076 aa).

A fibronectin-binding region spans residues 264–284; the sequence is QGYDQGYDQQYDQQGYDQQGY. Low complexity predominate over residues 326 to 335; the sequence is QQPVEVAKPA. Residues 326–351 form a disordered region; that stretch reads QQPVEVAKPAPTKPVGPKPQPGKKAT. Over residues 336–345 the composition is skewed to pro residues; sequence PTKPVGPKPQ. Residues 562–616 are a coiled coil; that stretch reads EITKLEELVEIKTDNTESLNKLETLIDENKKIIDQFKQLKEEAKKSNSNINLEKV. Disordered stretches follow at residues 789-808 and 850-873; these read SREHEQVQPKAQHQQPTTRI and RINPQDSYYDQGYEQPDPYQEQQP. Positions 797-806 are enriched in polar residues; it reads PKAQHQQPTT. Positions 862–873 are enriched in low complexity; that stretch reads YEQPDPYQEQQP.

It localises to the cell projection. Its subcellular location is the attachment organelle membrane. Its function is as follows. Binds immobilized fibronectin. Component of the cytoskeleton-like structure which stabilizes the shape of the wall-less mycoplasma. This cytoskeleton-like network of accessory proteins containing HMW proteins 1 to 5 allows the proper anchoring of cytadhesin proteins in the mycoplasmal membrane at the attachment organelle. Essential for successful surface parasitism. The protein is Cytadherence high molecular weight protein 3 (hlp3) of Mycoplasmoides gallisepticum (strain R(low / passage 15 / clone 2)) (Mycoplasma gallisepticum).